A 119-amino-acid polypeptide reads, in one-letter code: MKKIKEAEQRKLRRKKRIKDKIGRGVASRPRITVFKSNRYFYAQVIDDSKGHTIASISTIEKSLNLGKNIDDVKKLGEVLAKRLKEKNINNLIFDRNGYKYHGLIASFATSLREFGINI.

Residues 1 to 10 (MKKIKEAEQR) are compositionally biased toward basic and acidic residues. The interval 1 to 20 (MKKIKEAEQRKLRRKKRIKD) is disordered.

The protein belongs to the universal ribosomal protein uL18 family. In terms of assembly, part of the 50S ribosomal subunit; part of the 5S rRNA/L5/L18/L25 subcomplex. Contacts the 5S and 23S rRNAs.

This is one of the proteins that bind and probably mediate the attachment of the 5S RNA into the large ribosomal subunit, where it forms part of the central protuberance. In Borreliella burgdorferi (strain ATCC 35210 / DSM 4680 / CIP 102532 / B31) (Borrelia burgdorferi), this protein is Large ribosomal subunit protein uL18.